A 544-amino-acid polypeptide reads, in one-letter code: Chaperonin GroEL (544 aa).

ATP contacts are provided by residues 29–32 (TLGP), 86–90 (DGTTT), G413, 476–478 (NAA), and D492.

Belongs to the chaperonin (HSP60) family. Forms a cylinder of 14 subunits composed of two heptameric rings stacked back-to-back. Interacts with the co-chaperonin GroES.

It is found in the cytoplasm. It catalyses the reaction ATP + H2O + a folded polypeptide = ADP + phosphate + an unfolded polypeptide.. Its function is as follows. Together with its co-chaperonin GroES, plays an essential role in assisting protein folding. The GroEL-GroES system forms a nano-cage that allows encapsulation of the non-native substrate proteins and provides a physical environment optimized to promote and accelerate protein folding. The protein is Chaperonin GroEL of Halalkalibacterium halodurans (strain ATCC BAA-125 / DSM 18197 / FERM 7344 / JCM 9153 / C-125) (Bacillus halodurans).